Reading from the N-terminus, the 551-residue chain is Cleavage and polyadenylation specificity factor subunit 6 (551 aa).

The necessary for interaction with NXF1 stretch occupies residues 1-213 (MADGVDHIDI…RGRFPGAVPG (213 aa)). The 81-residue stretch at 81–161 (IALYIGNLTW…QNPVVTPCNK (81 aa)) folds into the RRM domain. The necessary for interaction with NUDT21/CPSF5 stretch occupies residues 81–161 (IALYIGNLTW…QNPVVTPCNK (81 aa)). The interval 81 to 161 (IALYIGNLTW…QNPVVTPCNK (81 aa)) is necessary for nuclear paraspeckles localization. The residue at position 157 (T157) is a Phosphothreonine. Residues 169 to 180 (MQSRKTTQSGQM) show a composition bias toward polar residues. 2 disordered regions span residues 169 to 411 (MQSR…PLSE) and 477 to 551 (LHGI…YRHR). The short motif at 202 to 206 (RGRGR) is the GAR element. Residues 207–219 (FPGAVPGGDRFPG) show a composition bias toward low complexity. Pro residues-rich tracts occupy residues 220-265 (PAGP…PLAG), 285-366 (GQPP…PPPT), and 377-388 (GPPPTDPYGRPP). A (Microbial infection) Binds to HIV-1 capsid protein p24 (CA) region spans residues 358–551 (NPAFFPPPTN…RDREREYRHR (194 aa)). Positions 389 to 404 (PYDRGDYGPPGREMDT) are enriched in basic and acidic residues. Phosphothreonine occurs at positions 404 and 407. Residues 404 to 551 (TARTPLSEAE…RDREREYRHR (148 aa)) are sufficient for nuclear speckle localization. Residues 405–551 (ARTPLSEAEF…RDREREYRHR (147 aa)) are necessary for RNA-binding. Residues 481-551 (ESKSYGSGSR…RDREREYRHR (71 aa)) form a necessary for interaction with SRSF3, SRSF7 and TRA2B/SFRS10 region. Positions 489 to 503 (SRRERSRERDHSRSR) are enriched in basic and acidic residues. The arg/Ser-rich domain stretch occupies residues 490 to 551 (RRERSRERDH…RDREREYRHR (62 aa)). Phosphoserine occurs at positions 494, 500, 511, 513, and 525. Basic residues predominate over residues 504–514 (EKSRRHKSRSR). The segment at 510-551 (KSRSRDRHDDYYRERSRERERHRDRDRDRDRERDREREYRHR) is sufficient for nuclear targeting. Residues 515–551 (DRHDDYYRERSRERERHRDRDRDRDRERDREREYRHR) show a composition bias toward basic and acidic residues.

It belongs to the RRM CPSF6/7 family. Component of the cleavage factor Im (CFIm) complex which is a heterotetramer composed of two subunits of NUDT21/CPSF5 and two subunits of CPSF6 or CPSF7 or a heterodimer of CPSF6 and CPSF7. The cleavage factor Im (CFIm) complex associates with the CPSF and CSTF complexes to promote the assembly of the core mRNA 3'-processing machinery. Associates with the exon junction complex (EJC). Associates with the 80S ribosome particle. Interacts (via the RRM domain) with NUDT21/CPSF5; this interaction is direct and enhances binding to RNA. Interacts (via Arg/Ser-rich domain) with FIP1L1 (preferentially via unphosphorylated form and Arg/Glu/Asp-rich domain); this interaction mediates, at least in part, the interaction between the CFIm and CPSF complexes and may be inhibited by CPSF6 hyper-phosphorylation. Interacts (via N-terminus) with NXF1; this interaction is direct. Interacts with SRSF3. Interacts with SRSF7. Interacts with SNRNP70. Interacts with TRA2B/SFRS10. Interacts with UPF1. Interacts with UPF3B. Interacts with VIRMA. Interacts (via Arg/Ser-rich domain) with TNPO3; promoting nuclear import of CPSF6 independently of its phosphorylation status. Interacts with YTHDC1. As to quaternary structure, (Microbial infection) Interacts (via C-terminus) with HIV-1 capsid protein p24 (CA). Post-translationally, phosphorylated. Phosphorylated in the Arg/Ser-rich domain by SRPK1, in vitro. In terms of processing, symmetrically dimethylated on arginine residues in the GAR motif by PRMT5 in a WDR77- and CLNS1A-dependent manner. Asymmetrically dimethylated on arginine residues in the GAR motif by PRMT1.

Its subcellular location is the nucleus. The protein resides in the nucleoplasm. The protein localises to the nucleus speckle. It localises to the cytoplasm. Component of the cleavage factor Im (CFIm) complex that functions as an activator of the pre-mRNA 3'-end cleavage and polyadenylation processing required for the maturation of pre-mRNA into functional mRNAs. CFIm contributes to the recruitment of multiprotein complexes on specific sequences on the pre-mRNA 3'-end, so called cleavage and polyadenylation signals (pA signals). Most pre-mRNAs contain multiple pA signals, resulting in alternative cleavage and polyadenylation (APA) producing mRNAs with variable 3'-end formation. The CFIm complex acts as a key regulator of cleavage and polyadenylation site choice during APA through its binding to 5'-UGUA-3' elements localized in the 3'-untranslated region (UTR) for a huge number of pre-mRNAs. CPSF6 enhances NUDT21/CPSF5 binding to 5'-UGUA-3' elements localized upstream of pA signals and promotes RNA looping, and hence activates directly the mRNA 3'-processing machinery. Plays a role in mRNA export. Functionally, (Microbial infection) Binds HIV-1 capsid-nucleocapsid (HIV-1 CA-NC) complexes and might thereby promote the integration of the virus in the nucleus of dividing cells (in vitro). This Homo sapiens (Human) protein is Cleavage and polyadenylation specificity factor subunit 6.